A 675-amino-acid polypeptide reads, in one-letter code: MNDISQKAEILLSSSKPVPKTYVPKLGKGDVKDKFEAMQRAREERNQRRSRDEKQRRKEQYIREREWNRRKQEIKEMLASDDEEDVSSKVEKAYVPKLTGTVKGRFAEMEKQRQEEQRKRTEEERKRRIEQDMLEKRKIQRELAKRAEQIEDINNTGTESASEEGDDSLLITVVPVKSYKTSGKMKKNFEDLEKEREEKERIKYEEDKRIRYEEQRPSLKEAKCLSLVMDDEIESEAKKESLSPGKLKLTFEELERQRQENRKKQAEEEARKRLEEEKRAFEEARRQMVNEDEENQDTAKIFKGYRPGKLKLSFEEMERQRREDEKRKAEEEARRRIEEEKKAFAEARRNMVVDDDSPEMYKTISQEFLTPGKLEINFEELLKQKMEEEKRRTEEERKHKLEMEKQEFEQLRQEMGEEEEENETFGLSREYEELIKLKRSGSIQAKNLKSKFEKIGQLSEKEIQKKIEEERARRRAIDLEIKEREAENFHEEDDVDVRPARKSEAPFTHKVNMKARFEQMAKAREEEEQRRIEEQKLLRMQFEQREIDAALQKKREEEEEEEGSIMNGSTAEDEEQTRSGAPWFKKPLKNTSVVDSEPVRFTVKVTGEPKPEITWWFEGEILQDGEDYQYIERGETYCLYLPETFPEDGGEYMCKAVNNKGSAASTCILTIESKN.

The segment at 1–66 (MNDISQKAEI…RKEQYIRERE (66 aa)) is disordered. Lys-16 is subject to Phosphoserine. Positions 27 to 66 (GKGDVKDKFEAMQRAREERNQRRSRDEKQRRKEQYIRERE) are enriched in basic and acidic residues. Residue Ser-80 is modified to Phosphoserine. Residues 105–127 (RFAEMEKQRQEEQRKRTEEERKR) are disordered. Ser-241 carries the post-translational modification Phosphoserine. Disordered regions lie at residues 254–278 (LERQ…EEEK) and 313–336 (SFEE…ARRR). Ser-357 and Ser-365 each carry phosphoserine. Thr-370 is subject to Phosphothreonine. 2 disordered regions span residues 487–513 (ENFH…KVNM) and 551–584 (LQKK…APWF). 2 positions are modified to phosphoserine: Ser-564 and Ser-569. The Ig-like domain occupies 582–670 (PWFKKPLKNT…GSAASTCILT (89 aa)).

Interacts with F-actin. In terms of tissue distribution, abundantly expressed in heart and skeletal muscle, and at lower levels in placenta, lung, liver and pancreas. Also expressed in HeLaS3 and MOLT-4 cell lines.

It is found in the cytoplasm. The protein resides in the cytoskeleton. It localises to the cell junction. The protein localises to the adherens junction. Its subcellular location is the myofibril. It is found in the sarcomere. The protein resides in the z line. Its function is as follows. Involved in regulating cell migration through association with the actin cytoskeleton. Has an essential role in the maintenance of Z line and sarcomere integrity. This Homo sapiens (Human) protein is Nexilin.